A 938-amino-acid polypeptide reads, in one-letter code: Isoleucine--tRNA ligase (938 aa).

Positions 58–68 (PYANGSIHIGH) match the 'HIGH' region motif. K183 carries the post-translational modification N6-acetyllysine. E561 serves as a coordination point for L-isoleucyl-5'-AMP. A 'KMSKS' region motif is present at residues 602–606 (KMSKS). K605 contacts ATP. C901, C904, C921, and C924 together coordinate Zn(2+).

The protein belongs to the class-I aminoacyl-tRNA synthetase family. IleS type 1 subfamily. Monomer. Zn(2+) is required as a cofactor.

The protein resides in the cytoplasm. It catalyses the reaction tRNA(Ile) + L-isoleucine + ATP = L-isoleucyl-tRNA(Ile) + AMP + diphosphate. Its function is as follows. Catalyzes the attachment of isoleucine to tRNA(Ile). As IleRS can inadvertently accommodate and process structurally similar amino acids such as valine, to avoid such errors it has two additional distinct tRNA(Ile)-dependent editing activities. One activity is designated as 'pretransfer' editing and involves the hydrolysis of activated Val-AMP. The other activity is designated 'posttransfer' editing and involves deacylation of mischarged Val-tRNA(Ile). The polypeptide is Isoleucine--tRNA ligase (Escherichia coli O6:H1 (strain CFT073 / ATCC 700928 / UPEC)).